A 124-amino-acid polypeptide reads, in one-letter code: S-adenosylmethionine decarboxylase proenzyme (124 aa).

Serine 63 (schiff-base intermediate with substrate; via pyruvic acid) is an active-site residue. Serine 63 carries the pyruvic acid (Ser); by autocatalysis modification. Residue histidine 68 is the Proton acceptor; for processing activity of the active site. Cysteine 83 functions as the Proton donor; for catalytic activity in the catalytic mechanism.

This sequence belongs to the prokaryotic AdoMetDC family. Type 1 subfamily. In terms of assembly, heterotetramer of two alpha and two beta chains arranged as a dimer of alpha/beta heterodimers. The cofactor is pyruvate. In terms of processing, is synthesized initially as an inactive proenzyme. Formation of the active enzyme involves a self-maturation process in which the active site pyruvoyl group is generated from an internal serine residue via an autocatalytic post-translational modification. Two non-identical subunits are generated from the proenzyme in this reaction, and the pyruvate is formed at the N-terminus of the alpha chain, which is derived from the carboxyl end of the proenzyme. The post-translation cleavage follows an unusual pathway, termed non-hydrolytic serinolysis, in which the side chain hydroxyl group of the serine supplies its oxygen atom to form the C-terminus of the beta chain, while the remainder of the serine residue undergoes an oxidative deamination to produce ammonia and the pyruvoyl group blocking the N-terminus of the alpha chain.

It catalyses the reaction S-adenosyl-L-methionine + H(+) = S-adenosyl 3-(methylsulfanyl)propylamine + CO2. Its pathway is amine and polyamine biosynthesis; S-adenosylmethioninamine biosynthesis; S-adenosylmethioninamine from S-adenosyl-L-methionine: step 1/1. Its function is as follows. Catalyzes the decarboxylation of S-adenosylmethionine to S-adenosylmethioninamine (dcAdoMet), the propylamine donor required for the synthesis of the polyamines spermine and spermidine from the diamine putrescine. This Acetivibrio thermocellus (strain ATCC 27405 / DSM 1237 / JCM 9322 / NBRC 103400 / NCIMB 10682 / NRRL B-4536 / VPI 7372) (Clostridium thermocellum) protein is S-adenosylmethionine decarboxylase proenzyme.